A 387-amino-acid chain; its full sequence is Succinate--CoA ligase [ADP-forming] subunit beta (387 aa).

Positions 9 to 236 (KELFAKHNVP…RAATDPLELK (228 aa)) constitute an ATP-grasp domain. Residues Lys-45, 52–54 (GRG), Ser-94, and Glu-99 each bind ATP. Positions 191 and 205 each coordinate Mg(2+). Substrate contacts are provided by residues Asn-256 and 318–320 (GIT).

Belongs to the succinate/malate CoA ligase beta subunit family. As to quaternary structure, heterotetramer of two alpha and two beta subunits. Mg(2+) serves as cofactor.

It carries out the reaction succinate + ATP + CoA = succinyl-CoA + ADP + phosphate. The catalysed reaction is GTP + succinate + CoA = succinyl-CoA + GDP + phosphate. It functions in the pathway carbohydrate metabolism; tricarboxylic acid cycle; succinate from succinyl-CoA (ligase route): step 1/1. Its function is as follows. Succinyl-CoA synthetase functions in the citric acid cycle (TCA), coupling the hydrolysis of succinyl-CoA to the synthesis of either ATP or GTP and thus represents the only step of substrate-level phosphorylation in the TCA. The beta subunit provides nucleotide specificity of the enzyme and binds the substrate succinate, while the binding sites for coenzyme A and phosphate are found in the alpha subunit. This is Succinate--CoA ligase [ADP-forming] subunit beta from Mycobacterium tuberculosis (strain CDC 1551 / Oshkosh).